A 453-amino-acid polypeptide reads, in one-letter code: uncharacterized protein (453 aa).

Residues C74, C80, C83, and C162 each coordinate [4Fe-4S] cluster. Residues Q286, Y315, E336, and D384 each coordinate S-adenosyl-L-methionine. C411 serves as the catalytic Nucleophile.

The protein belongs to the class I-like SAM-binding methyltransferase superfamily. RNA M5U methyltransferase family.

This is an uncharacterized protein from Staphylococcus aureus (strain MRSA252).